Consider the following 423-residue polypeptide: Divalent metal cation transporter MntH (423 aa).

11 consecutive transmembrane segments (helical) span residues 31 to 51 (LMMLGPAFIAAIGYIDPGNFA), 58 to 78 (SSFGYQLLWVVLWANLMAMLI), 116 to 136 (IIAIATDLAEFIGAAVGFQLV), 137 to 157 (FGISLMEGAMITAVATVMILI), 168 to 188 (VVIGSLLMLVAVIYIAELFFA), 213 to 233 (AAGILGATVMPHVIYLHSALF), 254 to 274 (IAMVIAGFVNIAIVAMAAAVF), 302 to 322 (VLFGVSLIASGLSSTVVGTMA), 342 to 362 (FITMAPSFVVIGLGMNTTDIL), 363 to 383 (VMSQVVLSFGIALAIIPLLIF), and 401 to 421 (YAGVVIVSLVLSLNAYLMVTL).

This sequence belongs to the NRAMP family.

It localises to the cell inner membrane. H(+)-stimulated, divalent metal cation uptake system. The polypeptide is Divalent metal cation transporter MntH (Vibrio campbellii (strain ATCC BAA-1116)).